A 450-amino-acid chain; its full sequence is Phosphoglucosamine mutase (450 aa).

Ser101 serves as the catalytic Phosphoserine intermediate. Residues Ser101, Asp240, Asp242, and Asp244 each coordinate Mg(2+). Ser101 carries the phosphoserine modification.

The protein belongs to the phosphohexose mutase family. Mg(2+) serves as cofactor. In terms of processing, activated by phosphorylation.

The enzyme catalyses alpha-D-glucosamine 1-phosphate = D-glucosamine 6-phosphate. Its function is as follows. Catalyzes the conversion of glucosamine-6-phosphate to glucosamine-1-phosphate. In Streptococcus gordonii (strain Challis / ATCC 35105 / BCRC 15272 / CH1 / DL1 / V288), this protein is Phosphoglucosamine mutase.